Here is a 589-residue protein sequence, read N- to C-terminus: Multidrug transporter FLR2 (589 aa).

The segment at 50-116 (KEEMKQDNQT…SSTKDASKPE (67 aa)) is disordered. Positions 56–73 (DNQTSTDSMSTSTQQETD) are enriched in low complexity. Asn-57 is a glycosylation site (N-linked (GlcNAc...) asparagine). Over residues 107–116 (SSTKDASKPE) the composition is skewed to basic and acidic residues. An N-linked (GlcNAc...) asparagine glycan is attached at Asn-136. The next 12 membrane-spanning stretches (helical) occupy residues 143-163 (TFVI…SSIY), 179-199 (VVGT…PIIF), 211-231 (MPLY…CALV), 234-254 (IAGL…VLAT), 275-295 (WAVG…AMVV), 301-321 (WIFW…IFFF), 378-398 (PIIL…YLFF), 417-437 (GLAF…LIIF), 455-475 (LFLI…FFFG), 480-500 (IHWI…FNLF), 516-536 (ASVF…FPLF), and 551-571 (VAWG…IPFV).

Belongs to the major facilitator superfamily.

It is found in the cell membrane. Multidrug transporter that confers resistance to 5-flucytosine (5-FC) and clotrimazole. Further confers azole drug resistance. Plays direct roles in extrusion of 5-flucytosine and clotrimazole. This Candida glabrata (strain ATCC 2001 / BCRC 20586 / JCM 3761 / NBRC 0622 / NRRL Y-65 / CBS 138) (Yeast) protein is Multidrug transporter FLR2.